Reading from the N-terminus, the 267-residue chain is Proteasome subunit alpha (267 aa).

Residues 231–267 are disordered; it reads ETLLQERDSKESAESEEPIESEEGKKTGKKSDADSSD. Composition is skewed to basic and acidic residues over residues 234 to 243 and 252 to 267; these read LQERDSKESA and EEGK…DSSD.

Belongs to the peptidase T1A family. As to quaternary structure, the 20S proteasome core is composed of 14 alpha and 14 beta subunits that assemble into four stacked heptameric rings, resulting in a barrel-shaped structure. The two inner rings, each composed of seven catalytic beta subunits, are sandwiched by two outer rings, each composed of seven alpha subunits. The catalytic chamber with the active sites is on the inside of the barrel. Has a gated structure, the ends of the cylinder being occluded by the N-termini of the alpha-subunits. Is capped by the proteasome-associated ATPase, ARC.

It localises to the cytoplasm. It functions in the pathway protein degradation; proteasomal Pup-dependent pathway. With respect to regulation, the formation of the proteasomal ATPase ARC-20S proteasome complex, likely via the docking of the C-termini of ARC into the intersubunit pockets in the alpha-rings, may trigger opening of the gate for substrate entry. Interconversion between the open-gate and close-gate conformations leads to a dynamic regulation of the 20S proteasome proteolysis activity. Its function is as follows. Component of the proteasome core, a large protease complex with broad specificity involved in protein degradation. This is Proteasome subunit alpha from Mycobacterium ulcerans (strain Agy99).